Reading from the N-terminus, the 435-residue chain is Protein GOLM2 (435 aa).

Residue Met1 is modified to N-acetylmethionine. Topologically, residues 1–14 are cytoplasmic; it reads MVGFGANRRAGRLP. The helical; Signal-anchor for type II membrane protein transmembrane segment at 15 to 35 threads the bilayer; it reads SFVLVVLLVVIVVLAFNYWSI. Positions 35–194 form a coiled coil; the sequence is ISSRHVLLQE…DQFLQEQKET (160 aa). The Lumenal segment spans residues 36–435; sequence SSRHVLLQEE…YGKQRFSDVL (400 aa). 2 stretches are compositionally biased toward basic and acidic residues: residues 191-212 and 223-239; these read QKET…DHGA and DANK…PHGK. Disordered stretches follow at residues 191–239 and 271–435; these read QKET…PHGK and PPVL…SDVL. Ser232 is subject to Phosphoserine. 2 stretches are compositionally biased toward polar residues: residues 282-294 and 302-320; these read QTIS…QPLS and HLNQ…SNPL. Residues 343 to 361 are compositionally biased toward basic and acidic residues; it reads ATRDRANDFHKLKQSRFFD. Ser365 bears the Phosphoserine mark. A compositionally biased stretch (acidic residues) spans 398 to 417; sequence YNEEEDGDGGEEDVQDDEER. A compositionally biased stretch (basic and acidic residues) spans 425 to 435; the sequence is DYGKQRFSDVL.

This sequence belongs to the GOLM family.

The protein localises to the membrane. The sequence is that of Protein GOLM2 from Mus musculus (Mouse).